The following is a 434-amino-acid chain: Cysteine--tRNA ligase (434 aa).

Cys-28 contributes to the Zn(2+) binding site. Positions 30-40 (PTVYDDIHIGN) match the 'HIGH' region motif. Cys-207, His-232, and Glu-236 together coordinate Zn(2+). Residues 264-268 (KMSKS) carry the 'KMSKS' region motif. Lys-267 is a binding site for ATP.

The protein belongs to the class-I aminoacyl-tRNA synthetase family. As to quaternary structure, monomer. Requires Zn(2+) as cofactor.

Its subcellular location is the cytoplasm. The enzyme catalyses tRNA(Cys) + L-cysteine + ATP = L-cysteinyl-tRNA(Cys) + AMP + diphosphate. In Acholeplasma laidlawii (strain PG-8A), this protein is Cysteine--tRNA ligase.